A 147-amino-acid chain; its full sequence is C-glycoside deglycosidase beta subunit (147 aa).

Belongs to the C-glycoside deglycosidase beta subunit family. In terms of assembly, heterooctamer composed of four alpha subunits (DfgA) and four beta subunits (DfgB). The cofactor is Mn(2+).

It carries out the reaction 3''-dehydroisoorientin = 1,5-anhydro-D-erythro-hex-1-en-3-ulose + luteolin. It catalyses the reaction 3''-dehydroisovitexin = 1,5-anhydro-D-erythro-hex-1-en-3-ulose + apigenin. Its activity is regulated as follows. Activity is strongly reduced in the presence of chelating agents. Its function is as follows. Carbon-carbon bond-cleaving enzyme which participates in the metabolism of C-glycosides. Acts on the C6-glycosylated compounds 3''-dehydroisoorientin (3''-oxo-homoorientin) and 3''-dehydroisovitexin (3''-oxo-isovitexin). This is C-glycoside deglycosidase beta subunit from Eubacterium cellulosolvens (strain ATCC 43171 / JCM 9499 / 6) (Cillobacterium cellulosolvens).